Here is a 383-residue protein sequence, read N- to C-terminus: Dual-specificity RNA methyltransferase RlmN (383 aa).

Catalysis depends on E93, which acts as the Proton acceptor. The 241-residue stretch at 99-339 (EETRGTLCVS…TTIRKTRGDD (241 aa)) folds into the Radical SAM core domain. Residues C106 and C344 are joined by a disulfide bond. C113, C117, and C120 together coordinate [4Fe-4S] cluster. S-adenosyl-L-methionine contacts are provided by residues 170–171 (GE), S202, 224–226 (SLH), and N301. C344 (S-methylcysteine intermediate) is an active-site residue.

The protein belongs to the radical SAM superfamily. RlmN family. It depends on [4Fe-4S] cluster as a cofactor.

The protein resides in the cytoplasm. The catalysed reaction is adenosine(2503) in 23S rRNA + 2 reduced [2Fe-2S]-[ferredoxin] + 2 S-adenosyl-L-methionine = 2-methyladenosine(2503) in 23S rRNA + 5'-deoxyadenosine + L-methionine + 2 oxidized [2Fe-2S]-[ferredoxin] + S-adenosyl-L-homocysteine. The enzyme catalyses adenosine(37) in tRNA + 2 reduced [2Fe-2S]-[ferredoxin] + 2 S-adenosyl-L-methionine = 2-methyladenosine(37) in tRNA + 5'-deoxyadenosine + L-methionine + 2 oxidized [2Fe-2S]-[ferredoxin] + S-adenosyl-L-homocysteine. In terms of biological role, specifically methylates position 2 of adenine 2503 in 23S rRNA and position 2 of adenine 37 in tRNAs. m2A2503 modification seems to play a crucial role in the proofreading step occurring at the peptidyl transferase center and thus would serve to optimize ribosomal fidelity. The protein is Dual-specificity RNA methyltransferase RlmN of Ralstonia pickettii (strain 12J).